Consider the following 286-residue polypeptide: Bifunctional protein FolD (286 aa).

Residues 165-167 (GRS), Ser190, and Val231 contribute to the NADP(+) site.

This sequence belongs to the tetrahydrofolate dehydrogenase/cyclohydrolase family. As to quaternary structure, homodimer.

The catalysed reaction is (6R)-5,10-methylene-5,6,7,8-tetrahydrofolate + NADP(+) = (6R)-5,10-methenyltetrahydrofolate + NADPH. It catalyses the reaction (6R)-5,10-methenyltetrahydrofolate + H2O = (6R)-10-formyltetrahydrofolate + H(+). The protein operates within one-carbon metabolism; tetrahydrofolate interconversion. In terms of biological role, catalyzes the oxidation of 5,10-methylenetetrahydrofolate to 5,10-methenyltetrahydrofolate and then the hydrolysis of 5,10-methenyltetrahydrofolate to 10-formyltetrahydrofolate. This is Bifunctional protein FolD from Bacillus cereus (strain G9842).